The primary structure comprises 312 residues: Malate dehydrogenase (312 aa).

NAD(+)-binding positions include 7 to 13 (GAAGGIG) and aspartate 34. Substrate is bound by residues arginine 81 and arginine 87. Residues asparagine 94 and 117-119 (ITN) contribute to the NAD(+) site. Positions 119 and 153 each coordinate substrate. Histidine 177 acts as the Proton acceptor in catalysis. NAD(+) is bound at residue methionine 227.

It belongs to the LDH/MDH superfamily. MDH type 1 family. In terms of assembly, homodimer.

It catalyses the reaction (S)-malate + NAD(+) = oxaloacetate + NADH + H(+). In terms of biological role, catalyzes the reversible oxidation of malate to oxaloacetate. The chain is Malate dehydrogenase from Enterobacter sp. (strain 638).